Consider the following 584-residue polypeptide: PE-PGRS family protein PE_PGRS11 (584 aa).

Residues 1–92 (MSFVIVARDA…AATSYAVTEV (92 aa)) enclose the PE domain. Histidine 290 serves as the catalytic Tele-phosphohistidine intermediate. Glutamate 365 acts as the Proton donor/acceptor in catalysis. Residues 384–584 (YLVGPIAWTL…LPIGLPSLIP (201 aa)) form a phosphoglycerate mutase region.

This sequence in the N-terminal section; belongs to the mycobacterial PE family. PGRS subfamily. In the C-terminal section; belongs to the phosphoglycerate mutase family. As to quaternary structure, interacts with human TLR2. It depends on Mg(2+) as a cofactor.

It is found in the secreted. The protein localises to the cell wall. The protein resides in the cell surface. It catalyses the reaction (2R)-2-phosphoglycerate = (2R)-3-phosphoglycerate. Induces maturation and activation of human dendritic cells (DCs), via TLR2-dependent activation of ERK1/2, p38 MAPK, and NF-kappa-B signaling pathways, and enhances the ability of DCs to stimulate CD4(+) T cells. By activating DCs, could potentially contribute to the initiation of innate immune responses during tuberculosis infection and hence regulate the clinical course of tuberculosis. Involved in resistance to oxidative stress, via TLR2-dependent activation of the PI3K-ERK1/2-NF-kappa-B signaling pathway and expression of COX-2 and Bcl2. Also abolishes H(2)O(2)-triggered activation of p38 MAPK. In Mycobacterium tuberculosis (strain ATCC 25618 / H37Rv), this protein is PE-PGRS family protein PE_PGRS11.